The sequence spans 249 residues: ATP synthase subunit a (249 aa).

5 helical membrane-spanning segments follow: residues 35-55 (ILLTSWFVIALILLAAFISSL), 92-112 (VPFIGTLFLFIFVSNWSGALV), 131-151 (INTTVALALLTSIAYFYAGIS), 187-209 (LFGNILADELVVGVLVLLVPLFI), and 221-241 (SAIQALIFATLAANYIGEALE).

This sequence belongs to the ATPase A chain family. As to quaternary structure, F-type ATPases have 2 components, CF(1) - the catalytic core - and CF(0) - the membrane proton channel. CF(1) has five subunits: alpha(3), beta(3), gamma(1), delta(1), epsilon(1). CF(0) has four main subunits: a, b, b' and c.

It localises to the cellular thylakoid membrane. Functionally, key component of the proton channel; it plays a direct role in the translocation of protons across the membrane. The polypeptide is ATP synthase subunit a (Trichodesmium erythraeum (strain IMS101)).